The chain runs to 499 residues: Cytochrome P450 monooxygenase ausI (499 aa).

A helical transmembrane segment spans residues 10-30; it reads PLGQPLIAGFVVVSAVLYLLY. Cys439 contacts heme. Asn483 carries an N-linked (GlcNAc...) asparagine glycan.

Belongs to the cytochrome P450 family. It depends on heme as a cofactor.

It is found in the membrane. Its pathway is secondary metabolite biosynthesis; terpenoid biosynthesis. Its function is as follows. Cytochrome P450 monooxygenase; part of the gene cluster B that mediates the biosynthesis of austinol and dehydroaustinol, two fungal meroterpenoids. The first step of the pathway is the synthesis of 3,5-dimethylorsellinic acid by the polyketide synthase ausA. 3,5-dimethylorsellinic acid is then prenylated by the polyprenyl transferase ausN. Further epoxidation by the FAD-dependent monooxygenase ausM and cyclization by the probable terpene cyclase ausL lead to the formation of protoaustinoid A. Protoaustinoid A is then oxidized to spiro-lactone preaustinoid A3 by the combined action of the FAD-binding monooxygenases ausB and ausC, and the dioxygenase ausE. Acid-catalyzed keto-rearrangement and ring contraction of the tetraketide portion of preaustinoid A3 by ausJ lead to the formation of preaustinoid A4. The aldo-keto reductase ausK, with the help of ausH, is involved in the next step by transforming preaustinoid A4 into isoaustinone which is in turn hydroxylated by the P450 monooxygenase ausI to form austinolide. Finally, the cytochrome P450 monooxygenase ausG modifies austinolide to austinol. Austinol can be further modified to dehydroaustinol which forms a diffusible complex with diorcinol that initiates conidiation. Due to genetic rearrangements of the clusters and the subsequent loss of some enzymes, the end products of the Emericella nidulans austinoid biosynthesis clusters are austinol and dehydroaustinol, even if additional enzymes, such as the O-acetyltransferase ausQ and the cytochrome P450 monooxygenase ausR are still functional. The polypeptide is Cytochrome P450 monooxygenase ausI (Emericella nidulans (strain FGSC A4 / ATCC 38163 / CBS 112.46 / NRRL 194 / M139) (Aspergillus nidulans)).